Consider the following 126-residue polypeptide: Late histone H2A.3, gonadal (126 aa).

Basic residues predominate over residues 1-18; sequence MSGRGKGAKAKGKAKSRS. The disordered stretch occupies residues 1-21; it reads MSGRGKGAKAKGKAKSRSSRA. Ser-2 carries the post-translational modification N-acetylserine. At Ser-2 the chain carries Phosphoserine. Gln-104 carries the post-translational modification N5-methylglutamine. Lys-119 is covalently cross-linked (Glycyl lysine isopeptide (Lys-Gly) (interchain with G-Cter in ubiquitin)).

The protein belongs to the histone H2A family. The nucleosome is a histone octamer containing two molecules each of H2A, H2B, H3 and H4 assembled in one H3-H4 heterotetramer and two H2A-H2B heterodimers. The octamer wraps approximately 147 bp of DNA. In terms of processing, monoubiquitination of Lys-119 gives a specific tag for epigenetic transcriptional repression. Phosphorylation of Ser-2 directly represses transcription.

It localises to the nucleus. Its subcellular location is the chromosome. Core component of nucleosome. Nucleosomes wrap and compact DNA into chromatin, limiting DNA accessibility to the cellular machineries which require DNA as a template. Histones thereby play a central role in transcription regulation, DNA repair, DNA replication and chromosomal stability. DNA accessibility is regulated via a complex set of post-translational modifications of histones, also called histone code, and nucleosome remodeling. The sequence is that of Late histone H2A.3, gonadal from Psammechinus miliaris (Green sea urchin).